The primary structure comprises 169 residues: Large ribosomal subunit protein uL10 (169 aa).

It belongs to the universal ribosomal protein uL10 family. Part of the ribosomal stalk of the 50S ribosomal subunit. The N-terminus interacts with L11 and the large rRNA to form the base of the stalk. The C-terminus forms an elongated spine to which L12 dimers bind in a sequential fashion forming a multimeric L10(L12)X complex.

Its function is as follows. Forms part of the ribosomal stalk, playing a central role in the interaction of the ribosome with GTP-bound translation factors. The chain is Large ribosomal subunit protein uL10 from Staphylococcus saprophyticus subsp. saprophyticus (strain ATCC 15305 / DSM 20229 / NCIMB 8711 / NCTC 7292 / S-41).